Consider the following 222-residue polypeptide: Adenylate kinase, chloroplastic (222 aa).

Alanine 15–threonine 20 contacts ATP. Positions serine 35 to valine 64 are NMP. AMP is bound by residues arginine 41, glutamine 62–valine 64, glycine 91–arginine 94, and glutamine 98. The segment at glycine 128–aspartate 161 is LID. Arginine 129 is a binding site for ATP. Position 158 (arginine 158) interacts with AMP. Alanine 195 lines the ATP pocket.

In terms of assembly, monomer.

It localises to the plastid. The protein localises to the chloroplast. It catalyses the reaction AMP + ATP = 2 ADP. Catalyzes the reversible transfer of the terminal phosphate group between ATP and AMP. Plays an important role in cellular energy homeostasis and in adenine nucleotide metabolism. The maize enzyme also works with CMP, albeit with 10% of the activity with AMP. The chain is Adenylate kinase, chloroplastic (ADK1) from Zea mays (Maize).